A 436-amino-acid chain; its full sequence is tRNA-2-methylthio-N(6)-dimethylallyladenosine synthase (436 aa).

Residues 5–121 form the MTTase N-terminal domain; it reads RKLFIKTYGC…LPDMLERTEG (117 aa). [4Fe-4S] cluster is bound by residues Cys14, Cys50, Cys84, Cys158, Cys162, and Cys165. Positions 144–374 constitute a Radical SAM core domain; it reads ATRGPAAFLT…TEQQRAAQMA (231 aa). Residues 373–435 enclose the TRAM domain; sequence MAMVGREVGV…PNSLAGERLG (63 aa).

It belongs to the methylthiotransferase family. MiaB subfamily. Monomer. [4Fe-4S] cluster is required as a cofactor.

Its subcellular location is the cytoplasm. The catalysed reaction is N(6)-dimethylallyladenosine(37) in tRNA + (sulfur carrier)-SH + AH2 + 2 S-adenosyl-L-methionine = 2-methylsulfanyl-N(6)-dimethylallyladenosine(37) in tRNA + (sulfur carrier)-H + 5'-deoxyadenosine + L-methionine + A + S-adenosyl-L-homocysteine + 2 H(+). Its function is as follows. Catalyzes the methylthiolation of N6-(dimethylallyl)adenosine (i(6)A), leading to the formation of 2-methylthio-N6-(dimethylallyl)adenosine (ms(2)i(6)A) at position 37 in tRNAs that read codons beginning with uridine. The sequence is that of tRNA-2-methylthio-N(6)-dimethylallyladenosine synthase from Cereibacter sphaeroides (strain ATCC 17023 / DSM 158 / JCM 6121 / CCUG 31486 / LMG 2827 / NBRC 12203 / NCIMB 8253 / ATH 2.4.1.) (Rhodobacter sphaeroides).